The following is a 72-amino-acid chain: Translation initiation factor IF-1 (72 aa).

The S1-like domain maps to Met-1–Lys-72.

The protein belongs to the IF-1 family. Component of the 30S ribosomal translation pre-initiation complex which assembles on the 30S ribosome in the order IF-2 and IF-3, IF-1 and N-formylmethionyl-tRNA(fMet); mRNA recruitment can occur at any time during PIC assembly.

The protein resides in the cytoplasm. In terms of biological role, one of the essential components for the initiation of protein synthesis. Stabilizes the binding of IF-2 and IF-3 on the 30S subunit to which N-formylmethionyl-tRNA(fMet) subsequently binds. Helps modulate mRNA selection, yielding the 30S pre-initiation complex (PIC). Upon addition of the 50S ribosomal subunit IF-1, IF-2 and IF-3 are released leaving the mature 70S translation initiation complex. This Helicobacter acinonychis (strain Sheeba) protein is Translation initiation factor IF-1.